The chain runs to 164 residues: S-ribosylhomocysteine lyase (164 aa).

Fe cation contacts are provided by His-61, His-65, and Cys-131.

This sequence belongs to the LuxS family. Homodimer. Fe cation serves as cofactor.

It catalyses the reaction S-(5-deoxy-D-ribos-5-yl)-L-homocysteine = (S)-4,5-dihydroxypentane-2,3-dione + L-homocysteine. In terms of biological role, involved in the synthesis of autoinducer 2 (AI-2) which is secreted by bacteria and is used to communicate both the cell density and the metabolic potential of the environment. The regulation of gene expression in response to changes in cell density is called quorum sensing. Catalyzes the transformation of S-ribosylhomocysteine (RHC) to homocysteine (HC) and 4,5-dihydroxy-2,3-pentadione (DPD). The chain is S-ribosylhomocysteine lyase from Bifidobacterium longum (strain DJO10A).